Here is a 185-residue protein sequence, read N- to C-terminus: MKDKIIDNAITLFSEKGYDGTTLDDISKSVNIKKASLYYHYDNKEEIYRKSVENCFNYFIDFLLRNHDDNYSIDGLYQFLFKFIFDVDERYIKLYVQLSSAPEALNSEIKHHLQEINTTLHDELIKYYDPTHIALDKEDFINLILLFLETWYFRASFSQKFGIIEDSKNRFKDQVYSLLNVFLKK.

An HTH tetR-type domain is found at 1–59 (MKDKIIDNAITLFSEKGYDGTTLDDISKSVNIKKASLYYHYDNKEEIYRKSVENCFNYF). Positions 22-41 (TLDDISKSVNIKKASLYYHY) form a DNA-binding region, H-T-H motif.

Homodimer.

Represses transcription of the icaADBC operon necessary for biofilm production. The chain is Biofilm operon icaADBC HTH-type negative transcriptional regulator IcaR (icaR) from Staphylococcus epidermidis (strain ATCC 35984 / DSM 28319 / BCRC 17069 / CCUG 31568 / BM 3577 / RP62A).